Consider the following 784-residue polypeptide: Probable phosphoketolase (784 aa).

The protein belongs to the XFP family. The cofactor is thiamine diphosphate.

This Rhodopseudomonas palustris (strain BisB5) protein is Probable phosphoketolase.